Consider the following 612-residue polypeptide: Threonine--tRNA ligase (612 aa).

The catalytic stretch occupies residues 218–509 (DHRKLGVELG…LSEHFWGNFP (292 aa)). Zn(2+) is bound by residues Cys-310, His-361, and His-486.

The protein belongs to the class-II aminoacyl-tRNA synthetase family. In terms of assembly, homodimer. The cofactor is Zn(2+).

The protein resides in the cytoplasm. It catalyses the reaction tRNA(Thr) + L-threonine + ATP = L-threonyl-tRNA(Thr) + AMP + diphosphate + H(+). Catalyzes the attachment of threonine to tRNA(Thr) in a two-step reaction: L-threonine is first activated by ATP to form Thr-AMP and then transferred to the acceptor end of tRNA(Thr). Also edits incorrectly charged L-seryl-tRNA(Thr). The chain is Threonine--tRNA ligase from Helicobacter acinonychis (strain Sheeba).